The sequence spans 761 residues: Signal transducer and transcription activator (761 aa).

An SH2 domain is found at 594-658 (WKAGCIMGFI…APWTARDFQV (65 aa)). Tyrosine 711 is subject to Phosphotyrosine; by JAK.

The protein belongs to the transcription factor STAT family. As to quaternary structure, forms a homodimer or a heterodimer with a related family member. Post-translationally, tyrosine phosphorylated by hopscotch. Phosphorylation is required for DNA-binding activity and dimerization.

The protein resides in the cytoplasm. It localises to the nucleus. Functionally, might play a role in signal transduction and activation of transcription. Plays an important role in the segmental pattern formation in the early embryo by activating specific stripes of pair rule gene expression in early development as part of the Janus kinase-STAT pathway. Might play a role in male germline stem cell maintenance. The polypeptide is Signal transducer and transcription activator (Stat92E) (Drosophila melanogaster (Fruit fly)).